The following is a 755-amino-acid chain: Thermostable beta-glucosidase B (755 aa).

Aspartate 231 is a catalytic residue.

It belongs to the glycosyl hydrolase 3 family.

The enzyme catalyses Hydrolysis of terminal, non-reducing beta-D-glucosyl residues with release of beta-D-glucose.. Its pathway is glycan metabolism; cellulose degradation. The protein is Thermostable beta-glucosidase B (bglB) of Acetivibrio thermocellus (strain ATCC 27405 / DSM 1237 / JCM 9322 / NBRC 103400 / NCIMB 10682 / NRRL B-4536 / VPI 7372) (Clostridium thermocellum).